Here is a 256-residue protein sequence, read N- to C-terminus: Hydroxyacylglutathione hydrolase (256 aa).

Zn(2+) is bound by residues His54, His56, Asp58, His59, His113, Asp136, and His174.

The protein belongs to the metallo-beta-lactamase superfamily. Glyoxalase II family. Monomer. Zn(2+) serves as cofactor.

It catalyses the reaction an S-(2-hydroxyacyl)glutathione + H2O = a 2-hydroxy carboxylate + glutathione + H(+). It participates in secondary metabolite metabolism; methylglyoxal degradation; (R)-lactate from methylglyoxal: step 2/2. Its function is as follows. Thiolesterase that catalyzes the hydrolysis of S-D-lactoyl-glutathione to form glutathione and D-lactic acid. In Cyanothece sp. (strain PCC 7425 / ATCC 29141), this protein is Hydroxyacylglutathione hydrolase.